A 308-amino-acid polypeptide reads, in one-letter code: Cytochrome b (308 aa).

4 helical membrane passes run 1–21, 45–66, 81–101, and 146–166; these read FGSL…LLAM, WLIR…YFHI, WNIG…GYVL, and FFAL…VHLT. H51 and H65 together coordinate heme b. Heme b-binding residues include H150 and H164. H169 lines the a ubiquinone pocket. 3 consecutive transmembrane segments (helical) span residues 194-214, 256-276, and 288-308; these read TKDI…ALFS, LGGV…PLLH, and LSQI…WVGS.

Belongs to the cytochrome b family. In terms of assembly, the cytochrome bc1 complex contains 11 subunits: 3 respiratory subunits (MT-CYB, CYC1 and UQCRFS1), 2 core proteins (UQCRC1 and UQCRC2) and 6 low-molecular weight proteins (UQCRH/QCR6, UQCRB/QCR7, UQCRQ/QCR8, UQCR10/QCR9, UQCR11/QCR10 and a cleavage product of UQCRFS1). This cytochrome bc1 complex then forms a dimer. Heme b serves as cofactor.

The protein localises to the mitochondrion inner membrane. In terms of biological role, component of the ubiquinol-cytochrome c reductase complex (complex III or cytochrome b-c1 complex) that is part of the mitochondrial respiratory chain. The b-c1 complex mediates electron transfer from ubiquinol to cytochrome c. Contributes to the generation of a proton gradient across the mitochondrial membrane that is then used for ATP synthesis. In Baeolophus inornatus (Oak titmouse), this protein is Cytochrome b (MT-CYB).